The following is a 191-amino-acid chain: Surfactant protein C (191 aa).

The propeptide occupies 1 to 23; that stretch reads MDVGSKEVLMESPPDYSAAPRGR. Residues cysteine 28 and cysteine 29 are each lipidated (S-palmitoyl cysteine). Positions 59-191 are excised as a propeptide; sequence HMSQKHTEMV…LCGEVPLYYI (133 aa). In terms of domain architecture, BRICHOS spans 94–191; sequence FSFGSTGLVV…LCGEVPLYYI (98 aa). A disulfide bridge connects residues cysteine 121 and cysteine 183.

Its subcellular location is the secreted. It localises to the extracellular space. It is found in the surface film. In terms of biological role, pulmonary surfactant associated proteins promote alveolar stability by lowering the surface tension at the air-liquid interface in the peripheral air spaces. This Macaca mulatta (Rhesus macaque) protein is Surfactant protein C (SFTPC).